Consider the following 431-residue polypeptide: Enolase (431 aa).

Q163 contributes to the (2R)-2-phosphoglycerate binding site. E205 serves as the catalytic Proton donor. Residues D242, E283, and D310 each contribute to the Mg(2+) site. (2R)-2-phosphoglycerate is bound by residues K335, R364, S365, and K386. Residue K335 is the Proton acceptor of the active site.

Belongs to the enolase family. Mg(2+) is required as a cofactor.

It localises to the cytoplasm. The protein resides in the secreted. Its subcellular location is the cell surface. The enzyme catalyses (2R)-2-phosphoglycerate = phosphoenolpyruvate + H2O. The protein operates within carbohydrate degradation; glycolysis; pyruvate from D-glyceraldehyde 3-phosphate: step 4/5. In terms of biological role, catalyzes the reversible conversion of 2-phosphoglycerate (2-PG) into phosphoenolpyruvate (PEP). It is essential for the degradation of carbohydrates via glycolysis. This is Enolase from Kineococcus radiotolerans (strain ATCC BAA-149 / DSM 14245 / SRS30216).